The sequence spans 723 residues: LIM domain-binding protein 3 (723 aa).

In terms of domain architecture, PDZ spans 1–84 (MSYSVTLTGP…NLSLTLQKSK (84 aa)). Ser44, Ser98, and Asp112 each carry phosphoserine. 2 disordered regions span residues 89–134 (ISTT…GALE) and 164–193 (SPVA…RQYN). The residue at position 119 (Thr119) is a Phosphothreonine. Residues Ser121 and Ser123 each carry the phosphoserine modification. Residue Ser214 is modified to Phosphoserine. Arg216 carries the omega-N-methylarginine modification. Phosphoserine occurs at positions 220, 251, and 288. 2 disordered regions span residues 280-423 (GTEY…YSPT) and 436-525 (SPAP…PQVT). At Ala291 the chain carries Omega-N-methylarginine. Residues 309-376 (ATSPLLPASA…AAAASPAPSA (68 aa)) show a composition bias toward low complexity. Ile327 is modified (phosphoserine). Residue Ser330 is modified to Omega-N-methylarginine. A compositionally biased stretch (pro residues) spans 436–466 (SPAPTYTPSPAPTYSPSPAPAYTPSPAPNYT). Residues 490–509 (DSFSQKFAPGKSTTTVSKQT) are compositionally biased toward polar residues. Arg512 and Arg529 each carry omega-N-methylarginine. LIM zinc-binding domains are found at residues 545–603 (PLCG…QFFA), 604–663 (PICA…LFST), and 664–723 (KCHG…AINV).

In terms of assembly, interacts via its LIM domains with various PKC isoforms. Interacts via its PDZ domain with the ACTN2 C-terminal region. Interacts with MYOZ1, MYOZ2 and MYOZ3. Expressed primarily in adult heart and skeletal muscle, and detected at lower levels in lung. Isoforms are expressed in a tissue-specific manner. Isoform 1, isoform 3 and isoform 5 are expressed in heart, whereas isoform 2, isoform 4 and isoform 6 are expressed in skeletal muscle.

It localises to the cytoplasm. The protein resides in the perinuclear region. It is found in the cell projection. The protein localises to the pseudopodium. Its subcellular location is the cytoskeleton. It localises to the myofibril. The protein resides in the sarcomere. It is found in the z line. Functionally, may function as an adapter in striated muscle to couple protein kinase C-mediated signaling via its LIM domains to the cytoskeleton. The sequence is that of LIM domain-binding protein 3 from Mus musculus (Mouse).